A 251-amino-acid chain; its full sequence is Carbohydrate deacetylase (251 aa).

Residues histidine 59 and histidine 122 each contribute to the Mg(2+) site.

This sequence belongs to the YdjC deacetylase family. As to quaternary structure, homodimer. It depends on Mg(2+) as a cofactor.

Functionally, probably catalyzes the deacetylation of acetylated carbohydrates an important step in the degradation of oligosaccharides. The chain is Carbohydrate deacetylase from Vibrio parahaemolyticus serotype O3:K6 (strain RIMD 2210633).